Here is a 434-residue protein sequence, read N- to C-terminus: Glutamyl-tRNA reductase (434 aa).

Substrate-binding positions include 54-57 (TCNR), serine 113, 118-120 (EAQ), and glutamine 124. Cysteine 55 functions as the Nucleophile in the catalytic mechanism. 193–198 (GGGEVS) provides a ligand contact to NADP(+).

This sequence belongs to the glutamyl-tRNA reductase family. Homodimer.

The enzyme catalyses (S)-4-amino-5-oxopentanoate + tRNA(Glu) + NADP(+) = L-glutamyl-tRNA(Glu) + NADPH + H(+). It functions in the pathway porphyrin-containing compound metabolism; protoporphyrin-IX biosynthesis; 5-aminolevulinate from L-glutamyl-tRNA(Glu): step 1/2. Its pathway is porphyrin-containing compound metabolism; chlorophyll biosynthesis. Its function is as follows. Catalyzes the NADPH-dependent reduction of glutamyl-tRNA(Glu) to glutamate 1-semialdehyde (GSA). The chain is Glutamyl-tRNA reductase from Chloroflexus aurantiacus (strain ATCC 29366 / DSM 635 / J-10-fl).